Reading from the N-terminus, the 391-residue chain is S-adenosylmethionine synthase (391 aa).

Residue His14 participates in ATP binding. A Mg(2+)-binding site is contributed by Asp16. Residue Glu42 coordinates K(+). The L-methionine site is built by Glu55 and Gln98. The interval 98–108 (QSVDIAMGVDE) is flexible loop. Residues 172–174 (DGK), 238–239 (RF), Asp247, 253–254 (RK), Ala270, and Lys274 contribute to the ATP site. L-methionine is bound at residue Asp247. Lys278 is an L-methionine binding site.

This sequence belongs to the AdoMet synthase family. As to quaternary structure, homotetramer; dimer of dimers. Mg(2+) is required as a cofactor. It depends on K(+) as a cofactor.

The protein resides in the cytoplasm. It carries out the reaction L-methionine + ATP + H2O = S-adenosyl-L-methionine + phosphate + diphosphate. The protein operates within amino-acid biosynthesis; S-adenosyl-L-methionine biosynthesis; S-adenosyl-L-methionine from L-methionine: step 1/1. Catalyzes the formation of S-adenosylmethionine (AdoMet) from methionine and ATP. The overall synthetic reaction is composed of two sequential steps, AdoMet formation and the subsequent tripolyphosphate hydrolysis which occurs prior to release of AdoMet from the enzyme. The chain is S-adenosylmethionine synthase from Clostridium botulinum (strain Hall / ATCC 3502 / NCTC 13319 / Type A).